The primary structure comprises 178 residues: Large ribosomal subunit protein uL6 (178 aa).

It belongs to the universal ribosomal protein uL6 family. Part of the 50S ribosomal subunit.

Its function is as follows. This protein binds to the 23S rRNA, and is important in its secondary structure. It is located near the subunit interface in the base of the L7/L12 stalk, and near the tRNA binding site of the peptidyltransferase center. The chain is Large ribosomal subunit protein uL6 from Corynebacterium diphtheriae (strain ATCC 700971 / NCTC 13129 / Biotype gravis).